Reading from the N-terminus, the 506-residue chain is Acetaldehyde dehydrogenase (506 aa).

Residues Glu-262 and Cys-301 contribute to the active site.

The protein belongs to the aldehyde dehydrogenase family.

It catalyses the reaction acetaldehyde + NAD(+) + H2O = acetate + NADH + 2 H(+). It functions in the pathway alcohol metabolism; ethanol degradation; acetate from ethanol: step 2/2. In terms of biological role, catalyzes the NAD(+)-dependent oxidation of acetaldehyde to acetate. Is likely a component of the ethanol oxidation system that allows P.aeruginosa to grow on ethanol as the sole carbon and energy source. In Pseudomonas aeruginosa, this protein is Acetaldehyde dehydrogenase.